We begin with the raw amino-acid sequence, 670 residues long: Putative segment polarity protein dishevelled homolog DVL1P1 (670 aa).

The 85-residue stretch at 1-85 folds into the DIX domain; sequence MAETKIIYHM…RVVSWLVLVE (85 aa). Residues 89–240 form a disordered region; that stretch reads SDAGSQGTDS…ADRASSFSSM (152 aa). Basic residues predominate over residues 142–151; that stretch reads SHRRDRARRR. The span at 152-171 shows a compositional bias: basic and acidic residues; the sequence is NREEAARTNGHPRGDRRRDV. Low complexity-rich tracts occupy residues 176–192 and 201–214; these read DSASTALSSELESSSFV and SRLSSSTEQSTSSR. Residues 215-228 show a composition bias toward basic residues; it reads LIRKHKRRRRKQRL. The PDZ domain maps to 251–323; sequence TVTLNMERHH…NDDAVRVLRE (73 aa). Residues 400-474 enclose the DEP domain; it reads PDSGLEIRDR…SEQCYYVFGD (75 aa). Residues 518-642 are disordered; that stretch reads PGPPPCFPPA…PGGPPVRELA (125 aa). Composition is skewed to low complexity over residues 526-553 and 600-614; these read PAYQDPGFSYGSGSTGSQQSEGSKSSGS and SRGSSPRSQASSYAP.

Belongs to the DSH family. As to expression, expressed in thymus, heart, liver, kidney, brain, skeletal muscle, and pancreas.

The protein resides in the cytoplasm. In terms of biological role, may play a role in the signal transduction pathway mediated by multiple Wnt genes. The polypeptide is Putative segment polarity protein dishevelled homolog DVL1P1 (DVL1P1) (Homo sapiens (Human)).